The following is a 256-amino-acid chain: Low molecular mass lipoprotein 3 (256 aa).

Positions 1-17 (MKPAIVILCLFVASLYA) are cleaved as a signal peptide.

The protein belongs to the 30 kDa lipoprotein family. Detected in larval hemolymph (at protein level).

The protein resides in the secreted. The sequence is that of Low molecular mass lipoprotein 3 from Bombyx mori (Silk moth).